The following is a 364-amino-acid chain: Transposase for insertion sequence element IS1111A (364 aa).

The protein belongs to the transposase IS1111A/IS1328/IS1533 family.

Its function is as follows. Required for the transposition of the insertion element. This is Transposase for insertion sequence element IS1111A from Coxiella burnetii (strain RSA 493 / Nine Mile phase I).